The chain runs to 496 residues: UDP-N-acetylmuramoylalanine--D-glutamate ligase (496 aa).

Residue 130–136 participates in ATP binding; the sequence is GTNGKTT.

Belongs to the MurCDEF family.

The protein localises to the cytoplasm. It catalyses the reaction UDP-N-acetyl-alpha-D-muramoyl-L-alanine + D-glutamate + ATP = UDP-N-acetyl-alpha-D-muramoyl-L-alanyl-D-glutamate + ADP + phosphate + H(+). It participates in cell wall biogenesis; peptidoglycan biosynthesis. Functionally, cell wall formation. Catalyzes the addition of glutamate to the nucleotide precursor UDP-N-acetylmuramoyl-L-alanine (UMA). The sequence is that of UDP-N-acetylmuramoylalanine--D-glutamate ligase (murD) from Mycobacterium tuberculosis (strain CDC 1551 / Oshkosh).